The primary structure comprises 256 residues: ATP synthase peripheral stalk subunit b, mitochondrial (256 aa).

The N-terminal 42 residues, 1–42 (MLSRVVLSAAATAAPSLKNAAFLGPGVLQATRTFHTGQPHLV), are a transit peptide targeting the mitochondrion. The residue at position 131 (lysine 131) is an N6-succinyllysine. Residues lysine 139, lysine 154, lysine 162, lysine 221, lysine 233, and lysine 244 each carry the N6-acetyllysine modification.

Belongs to the eukaryotic ATPase B chain family. In terms of assembly, component of the ATP synthase complex composed at least of ATP5F1A/subunit alpha, ATP5F1B/subunit beta, ATP5MC1/subunit c (homooctomer), MT-ATP6/subunit a, MT-ATP8/subunit 8, ATP5ME/subunit e, ATP5MF/subunit f, ATP5MG/subunit g, ATP5MK/subunit k, ATP5MJ/subunit j, ATP5F1C/subunit gamma, ATP5F1D/subunit delta, ATP5F1E/subunit epsilon, ATP5PF/subunit F6, ATP5PB/subunit b, ATP5PD/subunit d, ATP5PO/subunit OSCP. ATP synthase complex consists of a soluble F(1) head domain (subunits alpha(3) and beta(3)) - the catalytic core - and a membrane F(0) domain - the membrane proton channel (subunits c, a, 8, e, f, g, k and j). These two domains are linked by a central stalk (subunits gamma, delta, and epsilon) rotating inside the F1 region and a stationary peripheral stalk (subunits F6, b, d, and OSCP).

Its subcellular location is the mitochondrion. It is found in the mitochondrion inner membrane. Its function is as follows. Subunit b, of the mitochondrial membrane ATP synthase complex (F(1)F(0) ATP synthase or Complex V) that produces ATP from ADP in the presence of a proton gradient across the membrane which is generated by electron transport complexes of the respiratory chain. ATP synthase complex consist of a soluble F(1) head domain - the catalytic core - and a membrane F(1) domain - the membrane proton channel. These two domains are linked by a central stalk rotating inside the F(1) region and a stationary peripheral stalk. During catalysis, ATP synthesis in the catalytic domain of F(1) is coupled via a rotary mechanism of the central stalk subunits to proton translocation. In vivo, can only synthesize ATP although its ATP hydrolase activity can be activated artificially in vitro. Part of the complex F(0) domain. Part of the complex F(0) domain and the peripheric stalk, which acts as a stator to hold the catalytic alpha(3)beta(3) subcomplex and subunit a/ATP6 static relative to the rotary elements. The sequence is that of ATP synthase peripheral stalk subunit b, mitochondrial from Homo sapiens (Human).